The sequence spans 453 residues: Ribosome biogenesis protein SSF2 (453 aa).

The span at methionine 1 to histidine 11 shows a compositional bias: basic residues. 3 disordered regions span residues methionine 1–isoleucine 22, lysine 275–lysine 327, and alanine 373–glutamate 453. The Brix domain occupies methionine 26–serine 348. Positions alanine 373 to alanine 398 are enriched in basic and acidic residues. The segment covering lysine 399–alanine 409 has biased composition (basic residues). The span at valine 440–glutamate 453 shows a compositional bias: acidic residues.

Part of a complex that includes BRX1, RPF1, RPF2 and SSF1 or SSF2.

The protein resides in the nucleus. It localises to the nucleolus. Required for biogenesis of the 60S ribosomal subunit. The chain is Ribosome biogenesis protein SSF2 (SSF2) from Saccharomyces cerevisiae (strain ATCC 204508 / S288c) (Baker's yeast).